The primary structure comprises 179 residues: MAKLHDYYRDQVVNELKDKFNYKSVMQVPRIEKITLNMGVGEALTDKKLLDNAVADLAAISGQKPLITKARKSVAGFKIRQGYPIGCKVTLRGERMWEFFERLITIAVPRIRDFRGLSAKSFDGRGNYSMGVREQIIFPEIDYDKVDRVRGLDITITTTAKSDEEGQALLAAFNFPFRK.

Belongs to the universal ribosomal protein uL5 family. In terms of assembly, part of the 50S ribosomal subunit; part of the 5S rRNA/L5/L18/L25 subcomplex. Contacts the 5S rRNA and the P site tRNA. Forms a bridge to the 30S subunit in the 70S ribosome.

This is one of the proteins that bind and probably mediate the attachment of the 5S RNA into the large ribosomal subunit, where it forms part of the central protuberance. In the 70S ribosome it contacts protein S13 of the 30S subunit (bridge B1b), connecting the 2 subunits; this bridge is implicated in subunit movement. Contacts the P site tRNA; the 5S rRNA and some of its associated proteins might help stabilize positioning of ribosome-bound tRNAs. The polypeptide is Large ribosomal subunit protein uL5 (Pasteurella multocida (strain Pm70)).